A 629-amino-acid polypeptide reads, in one-letter code: Probable alpha-L-arabinofuranosidase A (629 aa).

Residues 1-25 form the signal peptide; it reads MVALSTLSGLSALPFLFSLVQNVYG. Asn36, Asn51, Asn140, Asn152, Asn168, Asn171, Asn260, Asn494, and Asn534 each carry an N-linked (GlcNAc...) asparagine glycan.

This sequence belongs to the glycosyl hydrolase 51 family.

Its subcellular location is the secreted. The enzyme catalyses Hydrolysis of terminal non-reducing alpha-L-arabinofuranoside residues in alpha-L-arabinosides.. It participates in glycan metabolism; L-arabinan degradation. Functionally, alpha-L-arabinofuranosidase involved in the degradation of arabinoxylan, a major component of plant hemicellulose. Acts only on small linear 1,5-alpha-linked L-arabinofuranosyl oligosaccharides. This chain is Probable alpha-L-arabinofuranosidase A (abfA), found in Aspergillus oryzae (strain ATCC 42149 / RIB 40) (Yellow koji mold).